Reading from the N-terminus, the 455-residue chain is MPPLLTNRQAEELHKSMIAYLVASDLPDTAAALRREVNLSEDVFDPTTAKRYEGMLEKKWTSIARLQKKIMDLESRNATLQSELDNSTPASRLKRNQDPASWLPSTVRYSLESHRDKVNCVAFHPTFSSIASGSDDCTIKIWDWELGELERTLKGHTRAVRDVDYGGPRDNVLLASCSSDLSIKLWKPTDNYKNIRTLQGHDHIVSAVRFIPSRNLLVSASRDNDMRIWDVTTGYCVKTINGHTDWVRDVSISFDGRFLFSTGQDMTARLWDISTVSNIEHKRTMLGHENFIECCAFAPPTSYQFLAPLAGLGKRPSSTNGADFMATGSRDNTIKIWDSRGTCLMTLVGHDSWVQALVFHPGGKYLLSVSDDKTLRCWDLNQQGKCVKTLDAHESFVTSLRWAPGVAKNVPGGDGAAEGEGNDKNGAGSENPANIQMRCVVATGGWDQKLKIFAG.

One can recognise a LisH domain in the interval 9 to 41 (QAEELHKSMIAYLVASDLPDTAAALRREVNLSE). Residues 61 to 88 (TSIARLQKKIMDLESRNATLQSELDNST) are a coiled coil. WD repeat units follow at residues 113 to 154 (SHRD…RTLK), 156 to 196 (HTRA…KNIR), 200 to 239 (GHDH…CVKT), 242 to 281 (GHTD…NIEH), 287 to 347 (GHEN…LMTL), 349 to 388 (GHDS…KCVK), 392 to 438 (AHES…IQMR), and 440 to 455 (VVAT…IFAG). The disordered stretch occupies residues 408-431 (KNVPGGDGAAEGEGNDKNGAGSEN).

This sequence belongs to the WD repeat LIS1/nudF family. As to quaternary structure, self-associates. Interacts with nudE and dynein.

The protein resides in the cytoplasm. It is found in the cytoskeleton. The protein localises to the spindle pole. Functionally, positively regulates the activity of the minus-end directed microtubule motor protein dynein. May enhance dynein-mediated microtubule sliding by targeting dynein to the microtubule plus end. Required for nuclear migration during vegetative growth as well as development. Required for retrograde early endosome (EE) transport from the hyphal tip. Required for localization of dynein to the mitotic spindle poles. Recruits additional proteins to the dynein complex at SPBs. This Aspergillus flavus (strain ATCC 200026 / FGSC A1120 / IAM 13836 / NRRL 3357 / JCM 12722 / SRRC 167) protein is Nuclear distribution protein nudF.